A 230-amino-acid polypeptide reads, in one-letter code: C-methyltransferase CouO (230 aa).

This sequence belongs to the methyltransferase superfamily.

Its pathway is antibiotic biosynthesis. Functionally, mediates C-methylation at the 8-position of the aminocoumarin moieties in coumermycin A1 in the biosynthetic pathway of coumermycin antibiotic. Active on both mono- and bis-amides for mono- and di-C-methylation adjacent to the phenolic hydroxyl before it is glycosylated by CouM. This is C-methyltransferase CouO (couO) from Streptomyces rishiriensis.